A 590-amino-acid chain; its full sequence is Mannosyl-oligosaccharide 1,2-alpha-mannosidase mans-2 (590 aa).

Over 1–9 the chain is Cytoplasmic; it reads MKTVRFNKQ. Residues 10-30 form a helical; Signal-anchor for type II membrane protein membrane-spanning segment; that stretch reads ALAILAACFIFLLCVVCYFSA. At 31–590 the chain is on the lumenal side; sequence SSESHNAVVV…EAHPVPVLTN (560 aa). Over residues 88 to 102 the composition is skewed to basic and acidic residues; the sequence is PARVESKPPGEKTST. The segment at 88 to 112 is disordered; the sequence is PARVESKPPGEKTSTEPEETGVGKA. N-linked (GlcNAc...) asparagine glycosylation is found at Asn-156, Asn-212, Asn-373, and Asn-402. A disulfide bridge links Cys-423 with Cys-456. Catalysis depends on Glu-470, which acts as the Proton donor. Thr-580 lines the Ca(2+) pocket.

Belongs to the glycosyl hydrolase 47 family. The cofactor is Ca(2+).

Its subcellular location is the membrane. It catalyses the reaction N(4)-(alpha-D-Man-(1-&gt;2)-alpha-D-Man-(1-&gt;2)-alpha-D-Man-(1-&gt;3)-[alpha-D-Man-(1-&gt;2)-alpha-D-Man-(1-&gt;3)-[alpha-D-Man-(1-&gt;2)-alpha-D-Man-(1-&gt;6)]-alpha-D-Man-(1-&gt;6)]-beta-D-Man-(1-&gt;4)-beta-D-GlcNAc-(1-&gt;4)-beta-D-GlcNAc)-L-asparaginyl-[protein] (N-glucan mannose isomer 9A1,2,3B1,2,3) + 4 H2O = N(4)-(alpha-D-Man-(1-&gt;3)-[alpha-D-Man-(1-&gt;3)-[alpha-D-Man-(1-&gt;6)]-alpha-D-Man-(1-&gt;6)]-beta-D-Man-(1-&gt;4)-beta-D-GlcNAc-(1-&gt;4)-beta-D-GlcNAc)-L-asparaginyl-[protein] (N-glucan mannose isomer 5A1,2) + 4 beta-D-mannose. The enzyme catalyses N(4)-(alpha-D-Man-(1-&gt;2)-alpha-D-Man-(1-&gt;2)-alpha-D-Man-(1-&gt;3)-[alpha-D-Man-(1-&gt;3)-[alpha-D-Man-(1-&gt;2)-alpha-D-Man-(1-&gt;6)]-alpha-D-Man-(1-&gt;6)]-beta-D-Man-(1-&gt;4)-beta-D-GlcNAc-(1-&gt;4)-beta-D-GlcNAc)-L-asparaginyl-[protein] (N-glucan mannose isomer 8A1,2,3B1,3) + 3 H2O = N(4)-(alpha-D-Man-(1-&gt;3)-[alpha-D-Man-(1-&gt;3)-[alpha-D-Man-(1-&gt;6)]-alpha-D-Man-(1-&gt;6)]-beta-D-Man-(1-&gt;4)-beta-D-GlcNAc-(1-&gt;4)-beta-D-GlcNAc)-L-asparaginyl-[protein] (N-glucan mannose isomer 5A1,2) + 3 beta-D-mannose. Its pathway is protein modification; protein glycosylation. Its function is as follows. Involved in the maturation of Asn-linked oligosaccharides. Progressively trim alpha-1,2-linked mannose residues from Man(9)GlcNAc(2) to produce Man(5)GlcNAc(2). The polypeptide is Mannosyl-oligosaccharide 1,2-alpha-mannosidase mans-2 (Caenorhabditis elegans).